The primary structure comprises 524 residues: Cytokinin dehydrogenase 7 (524 aa).

An N-terminal signal peptide occupies residues 1–22 (MAARCSIAFMIMASCLSVVVSG). N-linked (GlcNAc...) asparagine glycosylation occurs at asparagine 42. The FAD-binding PCMH-type domain occupies 55–233 (VAAAPEAVLH…TRARIGLMPA (179 aa)). Residues glycine 91 and glycine 93 each contribute to the FAD site. Histidine 94 is subject to Pros-8alpha-FAD histidine. Serine 95 and glutamine 99 together coordinate FAD. An N-linked (GlcNAc...) asparagine glycan is attached at asparagine 121. Aspartate 157, threonine 162, serine 168, isoleucine 172, and isoleucine 223 together coordinate FAD. N-linked (GlcNAc...) asparagine glycans are attached at residues asparagine 277 and asparagine 320. 3 residues coordinate FAD: tyrosine 472, serine 507, and glutamine 510.

It belongs to the oxygen-dependent FAD-linked oxidoreductase family. As to quaternary structure, monomer. FAD is required as a cofactor.

It is found in the secreted. Its subcellular location is the extracellular space. The enzyme catalyses N(6)-dimethylallyladenine + A + H2O = 3-methyl-2-butenal + adenine + AH2. In terms of biological role, catalyzes the oxidation of cytokinins, a family of N(6)-substituted adenine derivatives that are plant hormones, where the substituent is an isopentenyl group. The polypeptide is Cytokinin dehydrogenase 7 (CKX7) (Oryza sativa subsp. japonica (Rice)).